The following is a 530-amino-acid chain: Arginine--tRNA ligase (530 aa).

A 'HIGH' region motif is present at residues 113-123 (ANPTGPLHIGH).

The protein belongs to the class-I aminoacyl-tRNA synthetase family. As to quaternary structure, monomer.

It is found in the cytoplasm. It carries out the reaction tRNA(Arg) + L-arginine + ATP = L-arginyl-tRNA(Arg) + AMP + diphosphate. The sequence is that of Arginine--tRNA ligase from Campylobacter jejuni (strain RM1221).